The primary structure comprises 387 residues: Putative ribosomal RNA large subunit methyltransferase MJ1649 (387 aa).

Residues 5–81 (LIKLEIDRRA…EEIDYDFFYK (77 aa)) form the PUA domain.

It belongs to the methyltransferase superfamily. RlmI family.

It localises to the cytoplasm. This chain is Putative ribosomal RNA large subunit methyltransferase MJ1649, found in Methanocaldococcus jannaschii (strain ATCC 43067 / DSM 2661 / JAL-1 / JCM 10045 / NBRC 100440) (Methanococcus jannaschii).